A 130-amino-acid chain; its full sequence is MNVRRALADTSVFIGIEATRFDPDRFAGYEWGVSVVTLGELRLGVLQASGPEAAARRLSTYQLAQRFEPLGIDEAVSEAWALLVSKLRAAKLRVPINDSWIAATAVAHGIAILTQDNDYAAMPDVEVITI.

Positions 7–130 (LADTSVFIGI…AMPDVEVITI (124 aa)) constitute a PINc domain. Residues D9 and D98 each contribute to the Mg(2+) site.

It belongs to the PINc/VapC protein family. In terms of assembly, interacts with cognate antitoxin VapB4. It depends on Mg(2+) as a cofactor.

The protein resides in the secreted. Its function is as follows. Toxic component of a type II toxin-antitoxin (TA) system. Probably exerts its toxic effect by binding to mRNA, inhibiting translation. Binds to, recognizes and cleaves ssRNA at ACGC and AC(A/U)GC sequences, usually between the G and C; cleavage is not very efficient, nor is cleavage required to inhibit protein synthesis. Upon expression in situ, in M.smegmatis or E.coli inhibits cell growth and colony formation; in at least E.coli also causes increased levels of cellular RNA. Its toxic effect is neutralized by coexpression with cognate antitoxin VapB4. This is Ribonuclease VapC4 from Mycobacterium tuberculosis (strain ATCC 25618 / H37Rv).